Reading from the N-terminus, the 439-residue chain is MEKNVVKAEKNVEIVEFTFGPDEIAEAENEIVRYVNKNYTIPGFRKGKAPKRIIETFFGENFRDMVLEELSRKIEDTLKDEELFIPAVIADRKIEGDVAVFVVELHREPKVELKDYTGLELSVPKQEEVLANYVDNKLEELRNEAAIVEPKDGPAEIGDVINIEYTIEKDGKIIADHKTQEILIVEDDDRPIVTNVIGKKKGDIVEFDRTFENSNNKYHYKIEIKEVLKRTLMELNDEFAKSVASEVNTLEELKKKLEEEGLEAFESWKKDFLRQQVQDKLAELVELEISEKTLDYFVNRAIENAKKENTYDSYLKQAGSEEKLYEEFKTGILNELKKNTAIEKIAEKEQIEVTDEEVMKTAEELSTYWGISPERAKEIVKTREDIRNDIVENIRRTKVQDLIVEKATIKEISADEPVEEQKEEEEKEEAGSENSENKE.

Residues glycine 158–methionine 233 form the PPIase FKBP-type domain. The disordered stretch occupies residues lysine 410–glutamate 439. The segment covering alanine 414–glutamate 428 has biased composition (acidic residues).

It belongs to the FKBP-type PPIase family. Tig subfamily.

It is found in the cytoplasm. It carries out the reaction [protein]-peptidylproline (omega=180) = [protein]-peptidylproline (omega=0). Functionally, involved in protein export. Acts as a chaperone by maintaining the newly synthesized protein in an open conformation. Functions as a peptidyl-prolyl cis-trans isomerase. This chain is Trigger factor, found in Kosmotoga olearia (strain ATCC BAA-1733 / DSM 21960 / TBF 19.5.1).